The primary structure comprises 356 residues: Nicotinate-nucleotide--dimethylbenzimidazole phosphoribosyltransferase (356 aa).

Glu317 (proton acceptor) is an active-site residue.

The protein belongs to the CobT family. Homodimer.

It carries out the reaction 5,6-dimethylbenzimidazole + nicotinate beta-D-ribonucleotide = alpha-ribazole 5'-phosphate + nicotinate + H(+). The protein operates within nucleoside biosynthesis; alpha-ribazole biosynthesis; alpha-ribazole from 5,6-dimethylbenzimidazole: step 1/2. In terms of biological role, catalyzes the synthesis of alpha-ribazole-5'-phosphate from nicotinate mononucleotide (NAMN) and 5,6-dimethylbenzimidazole (DMB). This Salmonella paratyphi A (strain ATCC 9150 / SARB42) protein is Nicotinate-nucleotide--dimethylbenzimidazole phosphoribosyltransferase.